A 243-amino-acid polypeptide reads, in one-letter code: Probable transcriptional regulatory protein TTE1135 (243 aa).

It belongs to the TACO1 family.

It is found in the cytoplasm. This Caldanaerobacter subterraneus subsp. tengcongensis (strain DSM 15242 / JCM 11007 / NBRC 100824 / MB4) (Thermoanaerobacter tengcongensis) protein is Probable transcriptional regulatory protein TTE1135.